Here is a 214-residue protein sequence, read N- to C-terminus: MKNIGIINCGMGNLHSVSNAISNIGFNPVIINASKDLVSFACSALVLPGVGSFDLAIDRLEKKNLIEPVKLWIQEDRPFVGICLGLQLLFEGSDEGSKPGLKIFNGYVSQFKHSLVKKVPHMGWNKLYFNRFNTIDNLVPHYFHYDLQPWAYFVHSYYIEPKDCYTFNTTSLTFYGKQKIVSSISYNNILATQFHPEKSGLFGLFILKRFLSSY.

Positions 3–214 (NIGIINCGMG…FILKRFLSSY (212 aa)) constitute a Glutamine amidotransferase type-1 domain. Residue cysteine 83 is the Nucleophile of the active site. Catalysis depends on residues histidine 195 and glutamate 197.

Heterodimer of hisH and hisF.

It localises to the plastid. The protein resides in the chloroplast. It catalyses the reaction 5-[(5-phospho-1-deoxy-D-ribulos-1-ylimino)methylamino]-1-(5-phospho-beta-D-ribosyl)imidazole-4-carboxamide + L-glutamine = D-erythro-1-(imidazol-4-yl)glycerol 3-phosphate + 5-amino-1-(5-phospho-beta-D-ribosyl)imidazole-4-carboxamide + L-glutamate + H(+). The catalysed reaction is L-glutamine + H2O = L-glutamate + NH4(+). The protein operates within amino-acid biosynthesis; L-histidine biosynthesis; L-histidine from 5-phospho-alpha-D-ribose 1-diphosphate: step 5/9. Functionally, IGPS catalyzes the conversion of PRFAR and glutamine to IGP, AICAR and glutamate. The HisH subunit catalyzes the hydrolysis of glutamine to glutamate and ammonia as part of the synthesis of IGP and AICAR. The resulting ammonia molecule is channeled to the active site of HisF. This is Imidazole glycerol phosphate synthase subunit hisH (hisH) from Cyanidium caldarium (Red alga).